The following is a 635-amino-acid chain: Threonine--tRNA ligase (635 aa).

A TGS domain is found at 1–61 (MIQITLPDNS…DHDARLQIIT (61 aa)). A catalytic region spans residues 242–533 (DHRKLGKELD…LIEHHAGALP (292 aa)). Residues Cys333, His384, and His510 each contribute to the Zn(2+) site.

It belongs to the class-II aminoacyl-tRNA synthetase family. In terms of assembly, homodimer. Zn(2+) is required as a cofactor.

Its subcellular location is the cytoplasm. The catalysed reaction is tRNA(Thr) + L-threonine + ATP = L-threonyl-tRNA(Thr) + AMP + diphosphate + H(+). Catalyzes the attachment of threonine to tRNA(Thr) in a two-step reaction: L-threonine is first activated by ATP to form Thr-AMP and then transferred to the acceptor end of tRNA(Thr). Also edits incorrectly charged L-seryl-tRNA(Thr). The polypeptide is Threonine--tRNA ligase (Variovorax paradoxus (strain S110)).